Consider the following 395-residue polypeptide: Argininosuccinate synthase (395 aa).

Residues 6 to 14 (AYSGGLDTS) and A33 each bind ATP. Residue Y84 participates in L-citrulline binding. An ATP-binding site is contributed by G114. L-aspartate contacts are provided by T116, N120, and D121. Residue N120 participates in L-citrulline binding. Positions 124, 173, 182, 258, and 270 each coordinate L-citrulline.

Belongs to the argininosuccinate synthase family. Type 1 subfamily. Homotetramer.

Its subcellular location is the cytoplasm. It carries out the reaction L-citrulline + L-aspartate + ATP = 2-(N(omega)-L-arginino)succinate + AMP + diphosphate + H(+). Its pathway is amino-acid biosynthesis; L-arginine biosynthesis; L-arginine from L-ornithine and carbamoyl phosphate: step 2/3. The protein is Argininosuccinate synthase of Rhodococcoides fascians (Rhodococcus fascians).